The following is a 255-amino-acid chain: NAD kinase (255 aa).

Residue Asp44 is the Proton acceptor of the active site. NAD(+)-binding positions include 44 to 45 (DG), His49, 114 to 115 (NE), Asp144, Ala152, 155 to 160 (SAYNLS), and Gln216.

The protein belongs to the NAD kinase family. Requires a divalent metal cation as cofactor.

The protein resides in the cytoplasm. It carries out the reaction NAD(+) + ATP = ADP + NADP(+) + H(+). In terms of biological role, involved in the regulation of the intracellular balance of NAD and NADP, and is a key enzyme in the biosynthesis of NADP. Catalyzes specifically the phosphorylation on 2'-hydroxyl of the adenosine moiety of NAD to yield NADP. The protein is NAD kinase of Rickettsia bellii (strain OSU 85-389).